We begin with the raw amino-acid sequence, 222 residues long: Type II restriction enzyme MjaI (222 aa).

It carries out the reaction Endonucleolytic cleavage of DNA to give specific double-stranded fragments with terminal 5'-phosphates.. Its function is as follows. A P subtype restriction enzyme that recognizes the double-stranded sequence 5'-CTAG-3'; the cleavage site is unknown. This is Type II restriction enzyme MjaI (mjaIR) from Methanocaldococcus jannaschii (strain ATCC 43067 / DSM 2661 / JAL-1 / JCM 10045 / NBRC 100440) (Methanococcus jannaschii).